An 818-amino-acid chain; its full sequence is Cytosolic phospholipase A2 delta (818 aa).

The 120-residue stretch at 5–124 (SPGGPPGHPY…LPGKLLRKTF (120 aa)) folds into the C2 domain. Ca(2+)-binding residues include Asp38, Asp44, Asp94, Asp96, and Asp102. The PLA2c domain maps to 273–818 (GCPEELAVHL…LEARPPRAQT (546 aa)). 330 to 331 (GG) lines the substrate pocket. Ser361 acts as the Nucleophile in catalysis. The active-site Proton acceptor is Asp647.

Ca(2+) serves as cofactor. Expressed in stratified squamous epithelia, such as those in skin and cervix, but not in other tissues. Strongly expressed in the upper spinous layer of the psoriatic epidermis, expressed weakly and discontinuously in atopic dermatitis and mycosis fungoides, and not detected in the epidermis of normal skin.

The protein localises to the cytoplasm. Its subcellular location is the cytosol. It localises to the membrane. The catalysed reaction is a 1,2-diacyl-sn-glycero-3-phosphocholine + H2O = a 1-acyl-sn-glycero-3-phosphocholine + a fatty acid + H(+). The enzyme catalyses 1-hexadecanoyl-2-(5Z,8Z,11Z,14Z-eicosatetraenoyl)-sn-glycero-3-phosphocholine + H2O = 1-hexadecanoyl-sn-glycero-3-phosphocholine + (5Z,8Z,11Z,14Z)-eicosatetraenoate + H(+). It catalyses the reaction 1-hexadecanoyl-2-(9Z,12Z-octadecadienoyl)-sn-glycero-3-phosphocholine + H2O = (9Z,12Z)-octadecadienoate + 1-hexadecanoyl-sn-glycero-3-phosphocholine + H(+). It carries out the reaction 1-hexadecanoyl-2-(9Z-octadecenoyl)-sn-glycero-3-phosphocholine + H2O = 1-hexadecanoyl-sn-glycero-3-phosphocholine + (9Z)-octadecenoate + H(+). The catalysed reaction is 1-hexadecanoyl-2-(5Z,8Z,11Z,14Z-eicosatetraenoyl)-sn-glycero-3-phosphoethanolamine + H2O = 1-hexadecanoyl-sn-glycero-3-phosphoethanolamine + (5Z,8Z,11Z,14Z)-eicosatetraenoate + H(+). The enzyme catalyses 1-hexadecanoyl-2-(9Z,12Z-octadecadienoyl)-sn-glycero-3-phosphoethanolamine + H2O = 1-hexadecanoyl-sn-glycero-3-phosphoethanolamine + (9Z,12Z)-octadecadienoate + H(+). Its pathway is lipid metabolism; fatty acid metabolism. Its activity is regulated as follows. Stimulated by cytosolic Ca(2+). Functionally, calcium-dependent phospholipase A2 that selectively hydrolyzes glycerophospholipids in the sn-2 position. Has a preference for linoleic acid at the sn-2 position. The protein is Cytosolic phospholipase A2 delta of Homo sapiens (Human).